A 295-amino-acid chain; its full sequence is MEEFDSEDFSTSDEDEDYVPSGGEYSEDDVNELVKEDEVDGEEQAEKTKGKRRKAQSIPARKRKQSGLLLDEEEDGEEDSGGSSREEDEEEQEGGLGSETSRKKKEDELWASFLNDVGTKSKAASSSQVKVAEETEETSSSKPLVKADELEKPKESEKVKITKVFDFAGEEVRVTKEVDATSKEAKSFLKQTEKEKPQALVTSAATPPPAGSGIKRTSGMSSLLGKIGAKKQKMSTLEKSKLDWESFKEEEGIGEELAIHNRGKEGYIERKAFLERVDHRQFEIERDLRLSKMKP.

2 stretches are compositionally biased toward acidic residues: residues 1–18 and 25–43; these read MEEF…DEDY and YSED…DGEE. Disordered stretches follow at residues 1-155 and 188-219; these read MEEF…KPKE and FLKQ…RTSG. Residues 49-65 are compositionally biased toward basic residues; that stretch reads KGKRRKAQSIPARKRKQ. Residues 70–93 are compositionally biased toward acidic residues; that stretch reads LDEEEDGEEDSGGSSREEDEEEQE. Phosphoserine occurs at positions 80, 83, 84, and 112. Positions 120–130 are enriched in low complexity; that stretch reads KSKAASSSQVK. Composition is skewed to basic and acidic residues over residues 145 to 155 and 188 to 197; these read VKADELEKPKE and FLKQTEKEKP. Lys146 is covalently cross-linked (Glycyl lysine isopeptide (Lys-Gly) (interchain with G-Cter in SUMO2)). Positions 174 to 213 are hydrophilic; the sequence is VTKEVDATSKEAKSFLKQTEKEKPQALVTSAATPPPAGSG. Ser212 is subject to Phosphoserine. Residues 214–295 enclose the BCNT-C domain; that stretch reads IKRTSGMSSL…RDLRLSKMKP (82 aa). Lys215 is subject to N6-methyllysine. Position 246 is a phosphoserine (Ser246).

The protein localises to the chromosome. Its subcellular location is the centromere. It is found in the kinetochore. In terms of biological role, may play a role during embryogenesis. The chain is Craniofacial development protein 1 (Cfdp1) from Rattus norvegicus (Rat).